A 754-amino-acid polypeptide reads, in one-letter code: MTILTHTLGFPRVGLRRELKKAQESYWAGNSTREALLAVGRELRARHWEQQKQAGIDLLPVGDFAWYDHVLTTSLLLGNVPARHQNNDGSVDIDTLFRIGRGRAPTGEPAAAAEMTKWFNTNYHYIVPEFSKGQQFRLTWTQLLEEVDEALALGHKIKPVLLGPVTYLWLGKVKGEPFDRLTLLKDILPVYQHVLAELAKRGIEWVQIDELALVLELPQAWLDAFKPAYDALAGQVKLLLTTYFEGVTPNLDTIIALPAQGLHVDLIHGKDDVAELHQRLPVDWLLSAGLINGRNVWRADLTEKYAQINALVGKRALWVASSCSLLHSPIDLSVETRLDTEVKSWFAFALQKCGELALLRDALNSGETAALEEWSAPIQARRHSRRVHNAAVEKRLAAITAQDSQRENPYEVRAEAQRARFKLPAWPTTTIGSFPQTTEIRGLRLDFKKGNLDANNYRTGIAEHIKQAIIEQERLGLDVLVHGEAERNDMVEYFGEHLDGFVFTQNGWVQSYGSRCVKPPVVIGDISRPAPITVEWAKYAQSLTDKPVKGMLTGPVTILCWSFPREDVTRETIAKQIALALRDEVADLEAAGIGIIQIDEPALREGLPLRRSDWDAYLEWGVEAFRINAAVAKDETQIHTHMCYCEFNDIMDSIVALDADVITIETSRSDMELLESFEAFDYPNEIGPGVYDIHSPNVPSVEWIEALLKKAAQRIPAQRLWVNPDCGLKTRGWPETRAALANMVKAAHNLRQAK.

5-methyltetrahydropteroyltri-L-glutamate contacts are provided by residues 17–20 (RELK) and Lys-117. L-homocysteine contacts are provided by residues 431–433 (IGS) and Glu-484. Residues 431–433 (IGS) and Glu-484 contribute to the L-methionine site. 5-methyltetrahydropteroyltri-L-glutamate-binding positions include 515-516 (RC) and Trp-561. Asp-599 provides a ligand contact to L-homocysteine. Asp-599 contributes to the L-methionine binding site. Glu-605 lines the 5-methyltetrahydropteroyltri-L-glutamate pocket. Zn(2+)-binding residues include His-641, Cys-643, and Glu-665. His-694 acts as the Proton donor in catalysis. Residue Cys-726 coordinates Zn(2+).

It belongs to the vitamin-B12 independent methionine synthase family. Zn(2+) serves as cofactor.

The catalysed reaction is 5-methyltetrahydropteroyltri-L-glutamate + L-homocysteine = tetrahydropteroyltri-L-glutamate + L-methionine. It functions in the pathway amino-acid biosynthesis; L-methionine biosynthesis via de novo pathway; L-methionine from L-homocysteine (MetE route): step 1/1. In terms of biological role, catalyzes the transfer of a methyl group from 5-methyltetrahydrofolate to homocysteine resulting in methionine formation. This is 5-methyltetrahydropteroyltriglutamate--homocysteine methyltransferase from Salmonella paratyphi A (strain ATCC 9150 / SARB42).